The chain runs to 414 residues: Serine/threonine transporter SstT (414 aa).

The next 8 membrane-spanning stretches (helical) occupy residues 16–36 (GSLVKQILVGLVLGILLAWIS), 46–66 (LGTLFVGALKAVAPVLVLMLV), 84–104 (ILFLYLLGTFSAALAAVVFSF), 143–163 (ALLNANYIGILVWAVGLGFAL), 180–200 (AVTFMVKLVIRFAPIGIFGLV), 219–239 (LVVLIGCMLLVALVVNPLLVF), 300–320 (MAGAAITITVLTLAAVHTLGV), and 332–352 (VVASLCACGASGVAGGSLLLI).

The protein belongs to the dicarboxylate/amino acid:cation symporter (DAACS) (TC 2.A.23) family.

It localises to the cell inner membrane. The catalysed reaction is L-serine(in) + Na(+)(in) = L-serine(out) + Na(+)(out). It catalyses the reaction L-threonine(in) + Na(+)(in) = L-threonine(out) + Na(+)(out). Functionally, involved in the import of serine and threonine into the cell, with the concomitant import of sodium (symport system). This chain is Serine/threonine transporter SstT, found in Salmonella agona (strain SL483).